The primary structure comprises 313 residues: Acetyl-coenzyme A carboxylase carboxyl transferase subunit alpha (313 aa).

The CoA carboxyltransferase C-terminal domain maps to 42–292; that stretch reads KSDKLLRDTY…GAAIGEELDK (251 aa).

The protein belongs to the AccA family. As to quaternary structure, acetyl-CoA carboxylase is a heterohexamer composed of biotin carboxyl carrier protein (AccB), biotin carboxylase (AccC) and two subunits each of ACCase subunit alpha (AccA) and ACCase subunit beta (AccD).

It localises to the cytoplasm. It carries out the reaction N(6)-carboxybiotinyl-L-lysyl-[protein] + acetyl-CoA = N(6)-biotinyl-L-lysyl-[protein] + malonyl-CoA. Its pathway is lipid metabolism; malonyl-CoA biosynthesis; malonyl-CoA from acetyl-CoA: step 1/1. Its function is as follows. Component of the acetyl coenzyme A carboxylase (ACC) complex. First, biotin carboxylase catalyzes the carboxylation of biotin on its carrier protein (BCCP) and then the CO(2) group is transferred by the carboxyltransferase to acetyl-CoA to form malonyl-CoA. In Rhizorhabdus wittichii (strain DSM 6014 / CCUG 31198 / JCM 15750 / NBRC 105917 / EY 4224 / RW1) (Sphingomonas wittichii), this protein is Acetyl-coenzyme A carboxylase carboxyl transferase subunit alpha.